Consider the following 368-residue polypeptide: Peptide chain release factor 2 (368 aa).

Gln250 carries the post-translational modification N5-methylglutamine.

The protein belongs to the prokaryotic/mitochondrial release factor family. In terms of processing, methylated by PrmC. Methylation increases the termination efficiency of RF2.

It is found in the cytoplasm. Its function is as follows. Peptide chain release factor 2 directs the termination of translation in response to the peptide chain termination codons UGA and UAA. This Rickettsia conorii (strain ATCC VR-613 / Malish 7) protein is Peptide chain release factor 2.